The primary structure comprises 262 residues: Acyl-[acyl-carrier-protein]--UDP-N-acetylglucosamine O-acyltransferase (262 aa).

Belongs to the transferase hexapeptide repeat family. LpxA subfamily. Homotrimer.

It localises to the cytoplasm. It catalyses the reaction a (3R)-hydroxyacyl-[ACP] + UDP-N-acetyl-alpha-D-glucosamine = a UDP-3-O-[(3R)-3-hydroxyacyl]-N-acetyl-alpha-D-glucosamine + holo-[ACP]. Its pathway is glycolipid biosynthesis; lipid IV(A) biosynthesis; lipid IV(A) from (3R)-3-hydroxytetradecanoyl-[acyl-carrier-protein] and UDP-N-acetyl-alpha-D-glucosamine: step 1/6. Its function is as follows. Involved in the biosynthesis of lipid A, a phosphorylated glycolipid that anchors the lipopolysaccharide to the outer membrane of the cell. This chain is Acyl-[acyl-carrier-protein]--UDP-N-acetylglucosamine O-acyltransferase, found in Enterobacter sp. (strain 638).